A 591-amino-acid polypeptide reads, in one-letter code: V-type ATP synthase alpha chain (591 aa).

233-240 (GPFGAGKT) is a binding site for ATP.

It belongs to the ATPase alpha/beta chains family.

The enzyme catalyses ATP + H2O + 4 H(+)(in) = ADP + phosphate + 5 H(+)(out). Functionally, produces ATP from ADP in the presence of a proton gradient across the membrane. The V-type alpha chain is a catalytic subunit. In Streptococcus pyogenes serotype M2 (strain MGAS10270), this protein is V-type ATP synthase alpha chain.